Here is a 287-residue protein sequence, read N- to C-terminus: Probable glucose uptake protein GlcU (287 aa).

9 consecutive transmembrane segments (helical) span residues 7–29 (LIAL…VGGG), 34–56 (IRGT…FAKF), 58–75 (NPTV…WAFG), 114–136 (WSSM…GVAL), 156–178 (MGIL…IFGV), 183–202 (ALFF…SMNH), 209–228 (TALN…FMFY), 233–255 (VGVA…GGIF), and 267–286 (TGIW…LGNL).

The protein belongs to the GRP transporter (TC 2.A.7.5) family.

Its subcellular location is the cell membrane. In terms of biological role, involved in the uptake of glucose. This Staphylococcus aureus (strain COL) protein is Probable glucose uptake protein GlcU (glcU).